The chain runs to 451 residues: MKTKLSTCNVWSLLLVLLVWDPVRLVLANIQEDEAKNNITIFTRILDRLLDGYDNRLRPGLGDSITEVFTNIYVTSFGPVSDTDMEYTIDVFFRQKWKDERLKFKGPMNILRLNNLMASKIWTPDTFFHNGKKSVAHNMTMPNKLLRIQDDGTLLYTMRLTVQAECPMHLEDFPMDAHSCPLKFGSYAYTTSEVTYIWTYNASDSVQVAPDGSRLNQYDLLGQSIGKETIKSSTGEYTVMTAHFHLKRKIGYFVIQTYLPCIMTVILSQVSFWLNRESVPARTVFGVTTVLTMTTLSISARNSLPKVAYATAMDWFIAVCYAFVFSALIEFATVNYFTKRGWAWDGKSVVNDKKKEKGSVMIQNNAYAVAVANYAPNLSKDPVLSTISKSATTPEPNKKPENKPAEAKKTFNSVSKIDRMSRIVFPVLFGTFNLVYWATYLNREPVLGVSP.

Positions 1-28 are cleaved as a signal peptide; it reads MKTKLSTCNVWSLLLVLLVWDPVRLVLA. Residues 29-249 lie on the Extracellular side of the membrane; the sequence is NIQEDEAKNN…MTAHFHLKRK (221 aa). Asn38 carries N-linked (GlcNAc...) asparagine glycosylation. Residue Arg94 participates in 4-aminobutanoate binding. N-linked (GlcNAc...) asparagine glycosylation is present at Asn138. Thr157 contacts 4-aminobutanoate. A disulfide bridge links Cys166 with Cys180. The chain crosses the membrane as a helical span at residues 250–270; it reads IGYFVIQTYLPCIMTVILSQV. Residues 271-280 are Cytoplasmic-facing; the sequence is SFWLNRESVP. Residues 281 to 300 traverse the membrane as a helical segment; sequence ARTVFGVTTVLTMTTLSISA. Residues 301-311 lie on the Extracellular side of the membrane; it reads RNSLPKVAYAT. The chain crosses the membrane as a helical span at residues 312–332; sequence AMDWFIAVCYAFVFSALIEFA. The Cytoplasmic segment spans residues 333 to 420; sequence TVNYFTKRGW…FNSVSKIDRM (88 aa). Positions 389 to 408 are disordered; the sequence is KSATTPEPNKKPENKPAEAK. The segment covering 396-408 has biased composition (basic and acidic residues); sequence PNKKPENKPAEAK. Residues 421-441 form a helical membrane-spanning segment; the sequence is SRIVFPVLFGTFNLVYWATYL. Residues 442 to 451 are Extracellular-facing; the sequence is NREPVLGVSP.

Belongs to the ligand-gated ion channel (TC 1.A.9) family. Gamma-aminobutyric acid receptor (TC 1.A.9.5) subfamily. GABRA2 sub-subfamily. As to quaternary structure, heteropentamer, formed by a combination of alpha (GABRA1-6), beta (GABRB1-3), gamma (GABRG1-3), delta (GABRD), epsilon (GABRE), rho (GABRR1-3), pi (GABRP) and theta (GABRQ) subunits, each subunit exhibiting distinct physiological and pharmacological properties. Interacts with UBQLN1. Interacts with KIF21B. Interacts with LHFPL4. Interacts with SHISA7; interaction leads to the regulation of GABA(A) receptor trafficking, channel deactivation kinetics and pharmacology. Glycosylated.

The protein resides in the postsynaptic cell membrane. It localises to the cell membrane. It is found in the cytoplasmic vesicle membrane. Its subcellular location is the cell projection. The protein localises to the dendrite. It carries out the reaction chloride(in) = chloride(out). Activated by pentobarbital. Inhibited by the antagonist bicuculline. Its function is as follows. Alpha subunit of the heteropentameric ligand-gated chloride channel gated by gamma-aminobutyric acid (GABA), a major inhibitory neurotransmitter in the brain. GABA-gated chloride channels, also named GABA(A) receptors (GABAAR), consist of five subunits arranged around a central pore and contain GABA active binding site(s) located at the alpha and beta subunit interface(s). When activated by GABA, GABAARs selectively allow the flow of chloride anions across the cell membrane down their electrochemical gradient. Chloride influx into the postsynaptic neuron following GABAAR opening decreases the neuron ability to generate a new action potential, thereby reducing nerve transmission. The alpha-2 subunit exhibits synaptogenic activity together with beta-2 and very little to no activity together with beta-3, the gamma-2 subunit being necessary but not sufficient to induce rapid synaptic contacts formation. The chain is Gamma-aminobutyric acid receptor subunit alpha-2 from Mus musculus (Mouse).